The following is a 423-amino-acid chain: Histidine--tRNA ligase (423 aa).

This sequence belongs to the class-II aminoacyl-tRNA synthetase family. In terms of assembly, homodimer.

The protein localises to the cytoplasm. The enzyme catalyses tRNA(His) + L-histidine + ATP = L-histidyl-tRNA(His) + AMP + diphosphate + H(+). The polypeptide is Histidine--tRNA ligase (Geobacillus sp. (strain WCH70)).